The chain runs to 278 residues: 4-diphosphocytidyl-2-C-methyl-D-erythritol kinase (278 aa).

Residue Lys9 is part of the active site. Residue 89-99 (PVASGIGGGSA) participates in ATP binding. The active site involves Asp128.

This sequence belongs to the GHMP kinase family. IspE subfamily.

It carries out the reaction 4-CDP-2-C-methyl-D-erythritol + ATP = 4-CDP-2-C-methyl-D-erythritol 2-phosphate + ADP + H(+). The protein operates within isoprenoid biosynthesis; isopentenyl diphosphate biosynthesis via DXP pathway; isopentenyl diphosphate from 1-deoxy-D-xylulose 5-phosphate: step 3/6. In terms of biological role, catalyzes the phosphorylation of the position 2 hydroxy group of 4-diphosphocytidyl-2C-methyl-D-erythritol. This Cereibacter sphaeroides (strain ATCC 17025 / ATH 2.4.3) (Rhodobacter sphaeroides) protein is 4-diphosphocytidyl-2-C-methyl-D-erythritol kinase.